The chain runs to 457 residues: Probable cytosolic Fe-S cluster assembly factor oxy-4 (457 aa).

Cysteine 25 is a [4Fe-4S] cluster binding site. Residues 38 to 59 (KEESQVNIRTKKPKDKESSKTE) are disordered. [4Fe-4S] cluster-binding residues include cysteine 71, cysteine 74, cysteine 77, cysteine 176, cysteine 232, cysteine 380, and cysteine 384.

The protein belongs to the NARF family.

Component of the cytosolic iron-sulfur (Fe/S) protein assembly machinery. Required for maturation of extramitochondrial Fe/S proteins. This Caenorhabditis elegans protein is Probable cytosolic Fe-S cluster assembly factor oxy-4 (oxy-4).